The primary structure comprises 137 residues: Small ribosomal subunit protein uS12 (137 aa).

This sequence belongs to the universal ribosomal protein uS12 family. In terms of assembly, part of the 30S ribosomal subunit. Contacts proteins S8 and S17. May interact with IF1 in the 30S initiation complex.

In terms of biological role, with S4 and S5 plays an important role in translational accuracy. Functionally, interacts with and stabilizes bases of the 16S rRNA that are involved in tRNA selection in the A site and with the mRNA backbone. Located at the interface of the 30S and 50S subunits, it traverses the body of the 30S subunit contacting proteins on the other side and probably holding the rRNA structure together. The combined cluster of proteins S8, S12 and S17 appears to hold together the shoulder and platform of the 30S subunit. The polypeptide is Small ribosomal subunit protein uS12 (Lactiplantibacillus plantarum (strain ATCC BAA-793 / NCIMB 8826 / WCFS1) (Lactobacillus plantarum)).